The primary structure comprises 244 residues: Cysteine-rich secretory protein 1 (244 aa).

The signal sequence occupies residues 1–19; the sequence is MALMLVLFFLAAVLPPSLL. Residues 44–170 enclose the SCP domain; it reads SKHNQLRRMV…PLRYYYVCHY (127 aa). Residue Asn-145 is glycosylated (N-linked (GlcNAc...) asparagine). 5 disulfides stabilise this stretch: Cys-190–Cys-197, Cys-193–Cys-202, Cys-206–Cys-239, Cys-215–Cys-233, and Cys-224–Cys-237. The ShKT domain maps to 206–239; that stretch reads CGHEDKYTNCKYLKKMLSCEHELLKKGCKATCLC.

The protein belongs to the CRISP family. Mainly found in the cauda epididymis where it is synthesized by the principal cells and secreted into the lumen. Binds to the heads of spermatozoa. Also expressed in the submandibular gland.

It localises to the cytoplasmic vesicle. It is found in the secretory vesicle. Its function is as follows. This protein is supposed to help spermatozoa undergo functional maturation while they move from the testis to the ductus deferens. In Mus musculus (Mouse), this protein is Cysteine-rich secretory protein 1 (Crisp1).